A 21-amino-acid polypeptide reads, in one-letter code: Magainin-B1 (21 aa).

Expressed by the skin glands.

The protein localises to the secreted. Has no antimicrobial activity against tested bacteria. The sequence is that of Magainin-B1 from Xenopus borealis (Kenyan clawed frog).